The primary structure comprises 387 residues: Succinate--CoA ligase [ADP-forming] subunit beta (387 aa).

An ATP-grasp domain is found at 9-236 (KGLFAKHNVP…RAATDPLELK (228 aa)). Residues lysine 45, 52–54 (GRG), serine 94, and glutamate 99 contribute to the ATP site. Mg(2+) is bound by residues asparagine 191 and aspartate 205. Substrate is bound by residues asparagine 256 and 318–320 (GIT).

The protein belongs to the succinate/malate CoA ligase beta subunit family. In terms of assembly, heterotetramer of two alpha and two beta subunits. It depends on Mg(2+) as a cofactor.

It carries out the reaction succinate + ATP + CoA = succinyl-CoA + ADP + phosphate. It catalyses the reaction GTP + succinate + CoA = succinyl-CoA + GDP + phosphate. Its pathway is carbohydrate metabolism; tricarboxylic acid cycle; succinate from succinyl-CoA (ligase route): step 1/1. Succinyl-CoA synthetase functions in the citric acid cycle (TCA), coupling the hydrolysis of succinyl-CoA to the synthesis of either ATP or GTP and thus represents the only step of substrate-level phosphorylation in the TCA. The beta subunit provides nucleotide specificity of the enzyme and binds the substrate succinate, while the binding sites for coenzyme A and phosphate are found in the alpha subunit. The sequence is that of Succinate--CoA ligase [ADP-forming] subunit beta from Mycobacterium ulcerans (strain Agy99).